The chain runs to 138 residues: 10 kDa chaperonin 1, chloroplastic (138 aa).

Residues 1–61 (MASSFITVPK…VPQADRVLVR (61 aa)) constitute a chloroplast transit peptide. Residues 50–137 (KVVPQADRVL…CKESDLLAIV (88 aa)) form a cpn-10 domain region.

Belongs to the GroES chaperonin family. Expressed at low levels in germinating seeds, seedlings, rosettes leaves, flowers and siliques.

The protein localises to the plastid. It is found in the chloroplast. Functionally, functions as a co-chaperone for protein folding in chloroplasts. The sequence is that of 10 kDa chaperonin 1, chloroplastic from Arabidopsis thaliana (Mouse-ear cress).